The sequence spans 67 residues: Lantibiotic Flvbeta.b (67 aa).

The propeptide at 1-34 (MDNNTKLQKLYEQLAATGSEKELDAMLDENMAGA) is cleaved by FlvT. S36 is modified (2,3-didehydroalanine (Ser); by FlvM2). 2 positions are modified to 2,3-didehydrobutyrine; by FlvM2: T39 and T43. 3 cross-links (beta-methyllanthionine (Thr-Cys); by FlvM2) span residues 50 to 56 (TTGFDWC), 58 to 61 (TGAC), and 62 to 65 (TYSC).

Post-translationally, contains DL-beta-methyllanthionine, when coepressed in E.coli with the flavecin synthetase FlvM2.

It localises to the secreted. Lanthionine-containing peptide antibiotic (lantibiotic) only active on Gram-positive bacteria in synergy with Flvalpha.a. Is not active in absence of Flvalpha.a, which is encoded by the same operon than Flvbeta.b. The bactericidal activity of lantibiotics is based on depolarization of energized bacterial cytoplasmic membranes, initiated by the formation of aqueous transmembrane pores. The protein is Lantibiotic Flvbeta.b of Ruminococcus flavefaciens.